The primary structure comprises 100 residues: NADH-quinone oxidoreductase subunit K (100 aa).

Helical transmembrane passes span 4-24, 28-48, and 60-80; these read LQHG…GLVI, LLFM…AFVV, and VMYI…LALL.

The protein belongs to the complex I subunit 4L family. NDH-1 is composed of 13 different subunits. Subunits NuoA, H, J, K, L, M, N constitute the membrane sector of the complex.

The protein resides in the cell inner membrane. The enzyme catalyses a quinone + NADH + 5 H(+)(in) = a quinol + NAD(+) + 4 H(+)(out). NDH-1 shuttles electrons from NADH, via FMN and iron-sulfur (Fe-S) centers, to quinones in the respiratory chain. The immediate electron acceptor for the enzyme in this species is believed to be ubiquinone. Couples the redox reaction to proton translocation (for every two electrons transferred, four hydrogen ions are translocated across the cytoplasmic membrane), and thus conserves the redox energy in a proton gradient. The chain is NADH-quinone oxidoreductase subunit K from Shigella sonnei (strain Ss046).